The sequence spans 250 residues: 5'-nucleotidase SurE (250 aa).

Positions 8, 9, 39, and 92 each coordinate a divalent metal cation.

It belongs to the SurE nucleotidase family. A divalent metal cation serves as cofactor.

The protein localises to the cytoplasm. The enzyme catalyses a ribonucleoside 5'-phosphate + H2O = a ribonucleoside + phosphate. Nucleotidase that shows phosphatase activity on nucleoside 5'-monophosphates. In Vibrio cholerae serotype O1 (strain ATCC 39315 / El Tor Inaba N16961), this protein is 5'-nucleotidase SurE.